Here is a 422-residue protein sequence, read N- to C-terminus: 5'-deoxyadenosine deaminase (422 aa).

Zn(2+) is bound by residues His57 and His59. Substrate-binding residues include Glu86 and His178. His205 serves as a coordination point for Zn(2+). 2 residues coordinate substrate: Glu208 and Asp294. Asp294 lines the Zn(2+) pocket.

This sequence belongs to the metallo-dependent hydrolases superfamily. MTA/SAH deaminase family. Homotetramer. Zn(2+) is required as a cofactor.

It catalyses the reaction 5'-deoxyadenosine + H2O + H(+) = 5'-deoxyinosine + NH4(+). The enzyme catalyses S-adenosyl-L-homocysteine + H2O + H(+) = S-inosyl-L-homocysteine + NH4(+). The catalysed reaction is S-methyl-5'-thioadenosine + H2O + H(+) = S-methyl-5'-thioinosine + NH4(+). It carries out the reaction adenosine + H2O + H(+) = inosine + NH4(+). It functions in the pathway amino-acid biosynthesis; S-adenosyl-L-methionine biosynthesis. In terms of biological role, catalyzes the deamination of three SAM-derived enzymatic products, namely 5'-deoxyadenosine, S-adenosyl-L-homocysteine, and 5'-methylthioadenosine, to produce the inosine analogs. Can also deaminate adenosine. The preferred substrate for this enzyme is 5'-deoxyadenosine, but all these substrates are efficiently deaminated. Likely functions in a S-adenosyl-L-methionine (SAM) recycling pathway from S-adenosyl-L-homocysteine (SAH) produced from SAM-dependent methylation reactions. May also be involved in the recycling of 5'-deoxyadenosine, whereupon the 5'-deoxyribose moiety of 5'-deoxyinosine is further metabolized to deoxyhexoses used for the biosynthesis of aromatic amino acids in methanogens. This is 5'-deoxyadenosine deaminase from Methanococcus maripaludis (strain DSM 14266 / JCM 13030 / NBRC 101832 / S2 / LL).